A 349-amino-acid chain; its full sequence is Probable dual-specificity RNA methyltransferase RlmN (349 aa).

The active-site Proton acceptor is Glu94. The region spanning 100 to 334 (TETRTTACVS…VKVRRSRGKD (235 aa)) is the Radical SAM core domain. Cys107 and Cys339 are joined by a disulfide. Residues Cys114, Cys118, and Cys121 each coordinate [4Fe-4S] cluster. S-adenosyl-L-methionine contacts are provided by residues 165–166 (GE), Ser197, 220–222 (SLH), and Asn296. The S-methylcysteine intermediate role is filled by Cys339.

Belongs to the radical SAM superfamily. RlmN family. The cofactor is [4Fe-4S] cluster.

Its subcellular location is the cytoplasm. The enzyme catalyses adenosine(2503) in 23S rRNA + 2 reduced [2Fe-2S]-[ferredoxin] + 2 S-adenosyl-L-methionine = 2-methyladenosine(2503) in 23S rRNA + 5'-deoxyadenosine + L-methionine + 2 oxidized [2Fe-2S]-[ferredoxin] + S-adenosyl-L-homocysteine. It catalyses the reaction adenosine(37) in tRNA + 2 reduced [2Fe-2S]-[ferredoxin] + 2 S-adenosyl-L-methionine = 2-methyladenosine(37) in tRNA + 5'-deoxyadenosine + L-methionine + 2 oxidized [2Fe-2S]-[ferredoxin] + S-adenosyl-L-homocysteine. In terms of biological role, specifically methylates position 2 of adenine 2503 in 23S rRNA and position 2 of adenine 37 in tRNAs. This is Probable dual-specificity RNA methyltransferase RlmN from Flavobacterium johnsoniae (strain ATCC 17061 / DSM 2064 / JCM 8514 / BCRC 14874 / CCUG 350202 / NBRC 14942 / NCIMB 11054 / UW101) (Cytophaga johnsonae).